A 957-amino-acid polypeptide reads, in one-letter code: Glycine dehydrogenase (decarboxylating) (957 aa).

Lys702 is modified (N6-(pyridoxal phosphate)lysine).

This sequence belongs to the GcvP family. As to quaternary structure, the glycine cleavage system is composed of four proteins: P, T, L and H. It depends on pyridoxal 5'-phosphate as a cofactor.

The catalysed reaction is N(6)-[(R)-lipoyl]-L-lysyl-[glycine-cleavage complex H protein] + glycine + H(+) = N(6)-[(R)-S(8)-aminomethyldihydrolipoyl]-L-lysyl-[glycine-cleavage complex H protein] + CO2. Its function is as follows. The glycine cleavage system catalyzes the degradation of glycine. The P protein binds the alpha-amino group of glycine through its pyridoxal phosphate cofactor; CO(2) is released and the remaining methylamine moiety is then transferred to the lipoamide cofactor of the H protein. In Synechococcus sp. (strain RCC307), this protein is Glycine dehydrogenase (decarboxylating).